Here is a 382-residue protein sequence, read N- to C-terminus: Dodecanoyl-[acyl-carrier-protein] hydrolase, chloroplastic (382 aa).

Residues 1-83 (MATTSLASAF…FSAAEKQWTN (83 aa)) constitute a chloroplast transit peptide. Catalysis depends on residues N283, H285, and C320.

The protein belongs to the acyl-ACP thioesterase family. Forms homodimers. Expressed in developing cotyledons. Not detected in leaves.

Its subcellular location is the plastid. The protein localises to the chloroplast. It catalyses the reaction dodecanoyl-[ACP] + H2O = dodecanoate + holo-[ACP] + H(+). In terms of biological role, plays an essential role in chain termination during de novo fatty acid synthesis. High thioesterase activity for lauroyl-ACP versus other acyl-ACPs. This Umbellularia californica (California bay laurel) protein is Dodecanoyl-[acyl-carrier-protein] hydrolase, chloroplastic.